Reading from the N-terminus, the 475-residue chain is 1-aminocyclopropane-1-carboxylate synthase CMA101 (475 aa).

K272 bears the N6-(pyridoxal phosphate)lysine mark.

This sequence belongs to the class-I pyridoxal-phosphate-dependent aminotransferase family. As to quaternary structure, homodimer. It depends on pyridoxal 5'-phosphate as a cofactor.

The catalysed reaction is S-adenosyl-L-methionine = 1-aminocyclopropane-1-carboxylate + S-methyl-5'-thioadenosine + H(+). It functions in the pathway alkene biosynthesis; ethylene biosynthesis via S-adenosyl-L-methionine; ethylene from S-adenosyl-L-methionine: step 1/2. In terms of biological role, catalyzes the formation of 1-aminocyclopropane-1-carboxylate, a direct precursor of ethylene in higher plants. The protein is 1-aminocyclopropane-1-carboxylate synthase CMA101 (ACS2) of Cucurbita maxima (Pumpkin).